An 843-amino-acid chain; its full sequence is Protein translocase subunit SecA 1 (843 aa).

ATP contacts are provided by residues Gln-91, 109-113 (GEGKT), and Asp-498. Residues 799–813 (EAKHVSAEDGKEKVK) are compositionally biased toward basic and acidic residues. Residues 799-826 (EAKHVSAEDGKEKVKPKPIVKGDQVGRN) are disordered. Zn(2+)-binding residues include Cys-829, Cys-831, Cys-840, and His-841.

It belongs to the SecA family. Monomer and homodimer. Part of the essential Sec protein translocation apparatus which comprises SecA, SecYEG and auxiliary proteins SecDF. Other proteins may also be involved. Zn(2+) is required as a cofactor.

It localises to the cell membrane. It is found in the cytoplasm. The enzyme catalyses ATP + H2O + cellular proteinSide 1 = ADP + phosphate + cellular proteinSide 2.. Functionally, part of the Sec protein translocase complex. Interacts with the SecYEG preprotein conducting channel. Has a central role in coupling the hydrolysis of ATP to the transfer of proteins into and across the cell membrane, serving as an ATP-driven molecular motor driving the stepwise translocation of polypeptide chains across the membrane. In Staphylococcus aureus (strain MRSA252), this protein is Protein translocase subunit SecA 1.